Reading from the N-terminus, the 488-residue chain is E3 ubiquitin-protein ligase TRIM39 (488 aa).

The segment at 29 to 70 (CSVCLEYLKEPVIIECGHNFCKACITRWWEDLERDFPCPVCR) adopts an RING-type zinc-finger fold. Residues 102 to 143 (RDESLCSQHHEPLSLFCYEDQEAVCLICAISHTHRPHTVVPM) form a B box-type zinc finger. Zn(2+) contacts are provided by C107, H110, C129, and H135. Residues 181-250 (ELKRLVESRR…AHLAAEVEGK (70 aa)) adopt a coiled-coil conformation. 2 interaction with CDKN1A regions span residues 268 to 307 (KCEK…QLIA) and 359 to 488 (TSGR…TDWE). Residues 289–484 (SNFPRQYFAL…NAAPLTIRPP (196 aa)) form the B30.2/SPRY domain.

This sequence belongs to the TRIM/RBCC family. Interacts with MOAP1. Interacts with CDKN1A. Post-translationally, autoubiquitinated.

The protein resides in the cytoplasm. It is found in the cytosol. The protein localises to the mitochondrion. Its subcellular location is the nucleus. It catalyses the reaction S-ubiquitinyl-[E2 ubiquitin-conjugating enzyme]-L-cysteine + [acceptor protein]-L-lysine = [E2 ubiquitin-conjugating enzyme]-L-cysteine + N(6)-ubiquitinyl-[acceptor protein]-L-lysine.. Its pathway is protein modification; protein ubiquitination. In terms of biological role, E3 ubiquitin-protein ligase. May facilitate apoptosis by inhibiting APC/C-Cdh1-mediated poly-ubiquitination and subsequent proteasome-mediated degradation of the pro-apoptotic protein MOAP1. Regulates the G1/S transition of the cell cycle and DNA damage-induced G2 arrest by stabilizing CDKN1A/p21. Positively regulates CDKN1A/p21 stability by competing with DTL for CDKN1A/p21 binding, therefore disrupting DCX(DTL) E3 ubiquitin ligase complex-mediated CDKN1A/p21 ubiquitination and degradation. The sequence is that of E3 ubiquitin-protein ligase TRIM39 (Trim39) from Mus musculus (Mouse).